A 485-amino-acid polypeptide reads, in one-letter code: Glutamyl-tRNA(Gln) amidotransferase subunit A (485 aa).

Active-site charge relay system residues include lysine 78 and serine 153. Serine 177 serves as the catalytic Acyl-ester intermediate.

The protein belongs to the amidase family. GatA subfamily. In terms of assembly, heterotrimer of A, B and C subunits.

The catalysed reaction is L-glutamyl-tRNA(Gln) + L-glutamine + ATP + H2O = L-glutaminyl-tRNA(Gln) + L-glutamate + ADP + phosphate + H(+). In terms of biological role, allows the formation of correctly charged Gln-tRNA(Gln) through the transamidation of misacylated Glu-tRNA(Gln) in organisms which lack glutaminyl-tRNA synthetase. The reaction takes place in the presence of glutamine and ATP through an activated gamma-phospho-Glu-tRNA(Gln). This is Glutamyl-tRNA(Gln) amidotransferase subunit A from Geobacter sulfurreducens (strain ATCC 51573 / DSM 12127 / PCA).